The following is a 1161-amino-acid chain: Translation initiation factor IF-2 (1161 aa).

The disordered stretch occupies residues 67–561 (KSSFKAANEQ…RRAMELRAAK (495 aa)). Over residues 83-105 (QNKDSNSRSKPLNKEKPSKESLN) the composition is skewed to basic and acidic residues. Polar residues predominate over residues 139–154 (SRISNLQSQVLPNSHN). 2 stretches are compositionally biased toward basic and acidic residues: residues 164-180 (NPNE…EKKS) and 211-220 (KDIKANKKND). Composition is skewed to low complexity over residues 224-250 (NQRP…PRIK) and 268-282 (NSNR…PPSN). 3 stretches are compositionally biased toward polar residues: residues 295–311 (RQVT…QGVS), 352–362 (RQGAPNRQGSP), and 380–393 (LNRS…QNPS). A compositionally biased stretch (basic and acidic residues) spans 412–432 (ASDKEKLNRSNFEKQKVEPPK). Residues 440–461 (SRLNASPTAKKTPHRSFTNNSK) show a composition bias toward polar residues. 2 stretches are compositionally biased toward basic and acidic residues: residues 464 to 478 (GRSD…EALR) and 543 to 561 (KETT…RAAK). Residues 653-830 (KRPPVITVMG…EVEDLQANPE (178 aa)) enclose the tr-type G domain. The segment at 662-669 (GHVDHGKT) is G1. 662 to 669 (GHVDHGKT) is a binding site for GTP. Positions 687 to 691 (GITQH) are G2. The G3 stretch occupies residues 712-715 (DTPG). Residues 712–716 (DTPGH) and 766–769 (NKID) each bind GTP. The G4 stretch occupies residues 766–769 (NKID). The G5 stretch occupies residues 802 to 804 (SAI).

Belongs to the TRAFAC class translation factor GTPase superfamily. Classic translation factor GTPase family. IF-2 subfamily.

The protein resides in the cytoplasm. In terms of biological role, one of the essential components for the initiation of protein synthesis. Protects formylmethionyl-tRNA from spontaneous hydrolysis and promotes its binding to the 30S ribosomal subunits. Also involved in the hydrolysis of GTP during the formation of the 70S ribosomal complex. The chain is Translation initiation factor IF-2 from Prochlorococcus marinus (strain MIT 9515).